The primary structure comprises 422 residues: Pristinamycin IIA synthase subunit A (422 aa).

FMN is bound by residues Asp-59, Thr-101, His-151, Tyr-155, Ser-206, and Ser-207.

Belongs to the NtaA/SnaA/DszA monooxygenase family. Heterodimer of two subunits, SnaA and SnaB. FMN is required as a cofactor.

Catalyzes the oxidation of the proline residue of pristinamycin IIB (PIIB) to pristinamycin IIA (PIIA). In Streptomyces pristinaespiralis, this protein is Pristinamycin IIA synthase subunit A (snaA).